The following is a 29-amino-acid chain: Potassium-transporting ATPase KdpF subunit (29 aa).

Residues 2 to 22 (LIGEAVLAVVTVAVVAYLTYV) traverse the membrane as a helical segment.

It belongs to the KdpF family. The system is composed of three essential subunits: KdpA, KdpB and KdpC. The complex also contains KdpF, a small non-essential subunit.

It localises to the cell membrane. In terms of biological role, part of the high-affinity ATP-driven potassium transport (or Kdp) system, which catalyzes the hydrolysis of ATP coupled with the electrogenic transport of potassium into the cytoplasm. This subunit may be involved in stabilization of the complex. The Kdp system is essential for growth under K(+) limitation, and for survival under desiccation and salt crystal inclusion. This chain is Potassium-transporting ATPase KdpF subunit, found in Halobacterium salinarum (strain ATCC 29341 / DSM 671 / R1).